The sequence spans 78 residues: Large ribosomal subunit protein bL28 (78 aa).

The segment at 1–23 (MSRVCQVTGKRPMVGNNRSHAKN) is disordered.

It belongs to the bacterial ribosomal protein bL28 family.

The protein is Large ribosomal subunit protein bL28 of Shewanella pealeana (strain ATCC 700345 / ANG-SQ1).